A 427-amino-acid polypeptide reads, in one-letter code: 3-phosphoshikimate 1-carboxyvinyltransferase (427 aa).

The 3-phosphoshikimate site is built by K20, S21, and R25. K20 contacts phosphoenolpyruvate. Phosphoenolpyruvate is bound by residues G92 and R120. Residues S166, Q168, D312, and K339 each contribute to the 3-phosphoshikimate site. Q168 is a phosphoenolpyruvate binding site. D312 serves as the catalytic Proton acceptor. Phosphoenolpyruvate is bound by residues R343 and R385.

This sequence belongs to the EPSP synthase family. As to quaternary structure, monomer.

It localises to the cytoplasm. The enzyme catalyses 3-phosphoshikimate + phosphoenolpyruvate = 5-O-(1-carboxyvinyl)-3-phosphoshikimate + phosphate. Its pathway is metabolic intermediate biosynthesis; chorismate biosynthesis; chorismate from D-erythrose 4-phosphate and phosphoenolpyruvate: step 6/7. Its function is as follows. Catalyzes the transfer of the enolpyruvyl moiety of phosphoenolpyruvate (PEP) to the 5-hydroxyl of shikimate-3-phosphate (S3P) to produce enolpyruvyl shikimate-3-phosphate and inorganic phosphate. This Streptococcus pyogenes serotype M4 (strain MGAS10750) protein is 3-phosphoshikimate 1-carboxyvinyltransferase.